The chain runs to 85 residues: Putative membrane protein insertion efficiency factor (85 aa).

This sequence belongs to the UPF0161 family.

It localises to the cell membrane. Could be involved in insertion of integral membrane proteins into the membrane. This Buchnera aphidicola subsp. Baizongia pistaciae (strain Bp) protein is Putative membrane protein insertion efficiency factor.